The following is a 105-amino-acid chain: uncharacterized protein (105 aa).

The next 2 helical transmembrane spans lie at A56–I76 and I85–Y105.

The protein localises to the membrane. This is an uncharacterized protein from Aedes vexans (Inland floodwater mosquito).